The sequence spans 192 residues: Imidazoleglycerol-phosphate dehydratase (192 aa).

This sequence belongs to the imidazoleglycerol-phosphate dehydratase family.

Its subcellular location is the cytoplasm. The enzyme catalyses D-erythro-1-(imidazol-4-yl)glycerol 3-phosphate = 3-(imidazol-4-yl)-2-oxopropyl phosphate + H2O. Its pathway is amino-acid biosynthesis; L-histidine biosynthesis; L-histidine from 5-phospho-alpha-D-ribose 1-diphosphate: step 6/9. The polypeptide is Imidazoleglycerol-phosphate dehydratase (Staphylococcus aureus (strain JH9)).